Here is a 263-residue protein sequence, read N- to C-terminus: Endonuclease 8 (263 aa).

Proline 2 serves as the catalytic Schiff-base intermediate with DNA. The active-site Proton donor is the glutamate 3. Lysine 53 (proton donor; for beta-elimination activity) is an active-site residue. Residues glutamine 70, arginine 125, and asparagine 169 each coordinate DNA. The segment at 229–263 (KVFHRDGELCERCGGIIEKTTLSSRPFYWCPGCQH) adopts an FPG-type zinc-finger fold. Catalysis depends on arginine 253, which acts as the Proton donor; for delta-elimination activity.

Belongs to the FPG family. It depends on Zn(2+) as a cofactor.

It carries out the reaction 2'-deoxyribonucleotide-(2'-deoxyribose 5'-phosphate)-2'-deoxyribonucleotide-DNA = a 3'-end 2'-deoxyribonucleotide-(2,3-dehydro-2,3-deoxyribose 5'-phosphate)-DNA + a 5'-end 5'-phospho-2'-deoxyribonucleoside-DNA + H(+). Its function is as follows. Involved in base excision repair of DNA damaged by oxidation or by mutagenic agents. Acts as a DNA glycosylase that recognizes and removes damaged bases. Has a preference for oxidized pyrimidines, such as thymine glycol, 5,6-dihydrouracil and 5,6-dihydrothymine. Has AP (apurinic/apyrimidinic) lyase activity and introduces nicks in the DNA strand. Cleaves the DNA backbone by beta-delta elimination to generate a single-strand break at the site of the removed base with both 3'- and 5'-phosphates. The protein is Endonuclease 8 of Escherichia coli O157:H7.